The following is a 596-amino-acid chain: MASLPPHAGPATPLSPTRLSRLQEKEELRELNDRLAHYIDRVRALELENDRLLLRISEKEEVTTREVSGIKTLYESELADARRVLDETARERARLQIEIGKVQAELEEARKSAKKREGELTVAQGRVKDLESLFHRSEAELATALSDKQGLETEVAELRAQLAKAEDGHAVAKKQLEKETLMRVDLENRCQSLQEELAFSKSVFEEEVRETRRRHERRLVEVDSSRQQEYDFKMAQALEDLRSQHDEQVRLYRVELEQTYQAKLDNAKLLSDQNDKAAHAAREELKEARMRVESLSYQLLGLQKQASAAENHIHELEEALAGERDKFRKMLDAKEQEMTEVRDAMQQQLAEYQELLDIKLALDMEISAYRKLLEGEEERLKLSPSPSSRITISRATSSSSSSSGVGMSVGQGRGKRRRLETEDTSGSPSRASRVSSGSRLAQQTVATGVVNIDEVDPEGRFVRLKNSSDKDQSLGNWRIKRQVLEGEDIAYKFTPKYVLRAGQTVTVWAAGAGATHSPPSTLVWKSQTNWGPGESFRTALVSADGEEVAVKAAKHSSVQGRENGEEEEEEEAEFGEEDLFHQQGDPRTTSRGCRLM.

Residues 1 to 20 are disordered; it reads MASLPPHAGPATPLSPTRLS. The segment at 1–26 is head; it reads MASLPPHAGPATPLSPTRLSRLQEKE. Thr12 bears the Phosphothreonine mark. The residue at position 15 (Ser15) is a Phosphoserine. The IF rod domain maps to 24–380; the sequence is EKEELRELND…KLLEGEEERL (357 aa). The interval 27 to 61 is coil 1A; sequence ELRELNDRLAHYIDRVRALELENDRLLLRISEKEE. The residue at position 59 (Lys59) is an N6-acetyllysine; alternate. Residue Lys59 forms a Glycyl lysine isopeptide (Lys-Gly) (interchain with G-Cter in SUMO2); alternate linkage. The interval 62–73 is linker 1; sequence VTTREVSGIKTL. The segment at 74 to 207 is coil 1B; the sequence is YESELADARR…AFSKSVFEEE (134 aa). Residues Lys173 and Lys233 each participate in a glycyl lysine isopeptide (Lys-Gly) (interchain with G-Cter in SUMO2) cross-link. Residues 208 to 234 are linker 2; that stretch reads VRETRRRHERRLVEVDSSRQQEYDFKM. A coil 2 region spans residues 235–378; the sequence is AQALEDLRSQ…YRKLLEGEEE (144 aa). Ser294 and Ser385 each carry phosphoserine. Positions 376–440 are disordered; sequence EEERLKLSPS…ASRVSSGSRL (65 aa). The tail stretch occupies residues 379–596; that stretch reads RLKLSPSPSS…RTTSRGCRLM (218 aa). The segment covering 382 to 403 has biased composition (low complexity); it reads LSPSPSSRITISRATSSSSSSS. Residue Thr391 is glycosylated (O-linked (GlcNAc) threonine). 3 positions are modified to phosphoserine: Ser398, Ser400, and Ser402. Arg413 is modified (omega-N-methylarginine). Positions 415 to 420 match the Nuclear localization signal motif; the sequence is KRRRLE. Residues 425-439 are compositionally biased toward low complexity; sequence SGSPSRASRVSSGSR. The LTD domain occupies 438–559; that stretch reads SRLAQQTVAT…VKAAKHSSVQ (122 aa). Lys465 participates in a covalent cross-link: Glycyl lysine isopeptide (Lys-Gly) (interchain with G-Cter in SUMO2). Phosphoserine is present on Ser473. The interval 552 to 596 is disordered; the sequence is AAKHSSVQGRENGEEEEEEEAEFGEEDLFHQQGDPRTTSRGCRLM. Acidic residues predominate over residues 564–577; that stretch reads GEEEEEEEAEFGEE. The span at 585–596 shows a compositional bias: polar residues; the sequence is DPRTTSRGCRLM. The residue at position 593 (Cys593) is a Cysteine methyl ester. Residue Cys593 is the site of S-farnesyl cysteine attachment. The propeptide at 594–596 is removed in mature form; that stretch reads RLM.

This sequence belongs to the intermediate filament family. In terms of assembly, dimer. Lamin dimers then assemble into dimeric head-to-tail polymers. Ultimately, two head-to-tail polymers assemble laterally into a protofilament with a uniformly shaped rod of 3.5 nm in diameter. Interacts with TMEM43. In terms of processing, B-type lamins undergo a series of modifications, such as farnesylation and phosphorylation. Increased phosphorylation of the lamins occurs before envelope disintegration and probably plays a role in regulating lamin associations. Phosphorylation plays a key role in lamin organization, subcellular localization and nuclear envelope disintegration. Phosphorylation by CDK1 at Ser-15 and Ser-385 at the onset of mitosis drives lamin disassembly and nuclear envelope breakdown. As to expression, germ cell-specific.

Its subcellular location is the nucleus lamina. Functionally, lamins are intermediate filament proteins that assemble into a filamentous meshwork, and which constitute the major components of the nuclear lamina, a fibrous layer on the nucleoplasmic side of the inner nuclear membrane. Lamins provide a framework for the nuclear envelope, bridging the nuclear envelope and chromatin, thereby playing an important role in nuclear assembly, chromatin organization, nuclear membrane and telomere dynamics. The structural integrity of the lamina is strictly controlled by the cell cycle, as seen by the disintegration and formation of the nuclear envelope in prophase and telophase, respectively. In Mus musculus (Mouse), this protein is Lamin-B2 (Lmnb2).